We begin with the raw amino-acid sequence, 256 residues long: Probable aquaporin TIP4-2 (256 aa).

A run of 5 helical transmembrane segments spans residues 25-45 (AVAGELLFTFLFVFIGVASTI), 59-79 (AVTAAAMAQALVVAVLATAGF), 86-108 (LNPAVTLSLAVGGHITLFRSALY), 146-166 (GVAAEAVFTFTLLLVICATIL), and 178-198 (PLLTGLLVGANTVAGGALTGA). Positions 87–89 (NPA) match the NPA 1 motif. The NPA 2 signature appears at 201-203 (NPA). A helical membrane pass occupies residues 220 to 240 (VYWVGPLAGGPLAVVAYELLF).

It belongs to the MIP/aquaporin (TC 1.A.8) family. TIP (TC 1.A.8.10) subfamily. In terms of tissue distribution, expressed in roots, leaves and anthers.

The protein localises to the vacuole membrane. Aquaporins facilitate the transport of water and small neutral solutes across cell membranes. May be involved in transport from the vacuolar compartment to the cytoplasm. The polypeptide is Probable aquaporin TIP4-2 (TIP4-2) (Oryza sativa subsp. japonica (Rice)).